A 38-amino-acid polypeptide reads, in one-letter code: Large ribosomal subunit protein bL36 (38 aa).

This sequence belongs to the bacterial ribosomal protein bL36 family.

The polypeptide is Large ribosomal subunit protein bL36 (Ectopseudomonas mendocina (strain ymp) (Pseudomonas mendocina)).